A 514-amino-acid chain; its full sequence is CUGBP Elav-like family member 2 (514 aa).

3 consecutive RRM domains span residues 44–127 (IKMF…PADS), 136–216 (RKLF…FADT), and 429–507 (ANLF…LKRS).

The protein belongs to the CELF/BRUNOL family.

Its subcellular location is the nucleus. The protein resides in the cytoplasm. Functionally, RNA-binding protein implicated in the regulation of several post-transcriptional events. May be involved in pre-mRNA alternative splicing, mRNA translation repression and stability. The sequence is that of CUGBP Elav-like family member 2 (celf2) from Danio rerio (Zebrafish).